A 95-amino-acid chain; its full sequence is Basic phospholipase A2 (95 aa).

Residues Lys-7 and Lys-10 are each lipidated (N6-palmitoyl lysine). Residues Tyr-23, Gly-25, and Gly-27 each coordinate Ca(2+). 5 cysteine pairs are disulfide-bonded: Cys-24–Cys-40, Cys-39–Cys-77, Cys-46–Cys-70, Cys-53–Cys-63, and Cys-57–Cys-68. Residue His-43 is part of the active site. Asp-44 is a Ca(2+) binding site. The active site involves Asp-71.

In terms of assembly, monomer. Ca(2+) is required as a cofactor. In terms of tissue distribution, expressed by the venom gland.

The protein resides in the secreted. The catalysed reaction is a 1,2-diacyl-sn-glycero-3-phosphocholine + H2O = a 1-acyl-sn-glycero-3-phosphocholine + a fatty acid + H(+). Its function is as follows. PLA2 catalyzes the calcium-dependent hydrolysis of the 2-acyl groups in 3-sn-phosphoglycerides. Induces local and systemic myotoxicity in an intramuscular mouse model. Induces local edema in a mouse footpad assay. Does not exhibit any anticoagulant effects. Does not mediate an antibacterial effect against Gram-negative and Gram-positive bacteria. The sequence is that of Basic phospholipase A2 from Agkistrodon piscivorus leucostoma (Western cottonmouth).